The following is a 190-amino-acid chain: Elongation factor P-like protein (190 aa).

Belongs to the elongation factor P family.

The polypeptide is Elongation factor P-like protein (Cronobacter sakazakii (strain ATCC BAA-894) (Enterobacter sakazakii)).